Consider the following 296-residue polypeptide: MRQIVLRGMGVALITPFKCDGTVDYPALSYLVDYQLQNGIDYLIVLGTTAETPTLSYEEQKEIVRLVVSIVRERIPIVVGVGGNNTQAVIHKLNTEDFGKIDAILSVVPYYNKPTQDGIYQHFKYIAQATSLPIILYNVPSRTGVNMTAETSLLLANDFENIVAIKEASGNIDQIGVIIENKPSGFQVLSGDDELSLSLIGIGAVGVISVIGNVFPKEFGKMIRLALNGDSDNARIIHGQFAELFELLFIEGNPAGVKGMLNVMGFIENKLRLPLVPVLEATYERIKKALLMFRTQ.

Thr49 serves as a coordination point for pyruvate. Tyr137 acts as the Proton donor/acceptor in catalysis. Lys166 functions as the Schiff-base intermediate with substrate in the catalytic mechanism. Residue Ile208 coordinates pyruvate.

Belongs to the DapA family. Homotetramer; dimer of dimers.

Its subcellular location is the cytoplasm. It carries out the reaction L-aspartate 4-semialdehyde + pyruvate = (2S,4S)-4-hydroxy-2,3,4,5-tetrahydrodipicolinate + H2O + H(+). The protein operates within amino-acid biosynthesis; L-lysine biosynthesis via DAP pathway; (S)-tetrahydrodipicolinate from L-aspartate: step 3/4. In terms of biological role, catalyzes the condensation of (S)-aspartate-beta-semialdehyde [(S)-ASA] and pyruvate to 4-hydroxy-tetrahydrodipicolinate (HTPA). The sequence is that of 4-hydroxy-tetrahydrodipicolinate synthase from Azobacteroides pseudotrichonymphae genomovar. CFP2.